Here is a 266-residue protein sequence, read N- to C-terminus: 4-hydroxy-tetrahydrodipicolinate reductase (266 aa).

Residue 10–15 (GPRGRM) participates in NAD(+) binding. Lys38 is a binding site for NADP(+). NAD(+) is bound by residues 99-101 (GTT) and 125-128 (APNF). Catalysis depends on His155, which acts as the Proton donor/acceptor. His156 serves as a coordination point for (S)-2,3,4,5-tetrahydrodipicolinate. Lys159 (proton donor) is an active-site residue. 165 to 166 (GT) lines the (S)-2,3,4,5-tetrahydrodipicolinate pocket.

This sequence belongs to the DapB family.

The protein localises to the cytoplasm. It catalyses the reaction (S)-2,3,4,5-tetrahydrodipicolinate + NAD(+) + H2O = (2S,4S)-4-hydroxy-2,3,4,5-tetrahydrodipicolinate + NADH + H(+). The enzyme catalyses (S)-2,3,4,5-tetrahydrodipicolinate + NADP(+) + H2O = (2S,4S)-4-hydroxy-2,3,4,5-tetrahydrodipicolinate + NADPH + H(+). It participates in amino-acid biosynthesis; L-lysine biosynthesis via DAP pathway; (S)-tetrahydrodipicolinate from L-aspartate: step 4/4. In terms of biological role, catalyzes the conversion of 4-hydroxy-tetrahydrodipicolinate (HTPA) to tetrahydrodipicolinate. This Bacillus cereus (strain ATCC 14579 / DSM 31 / CCUG 7414 / JCM 2152 / NBRC 15305 / NCIMB 9373 / NCTC 2599 / NRRL B-3711) protein is 4-hydroxy-tetrahydrodipicolinate reductase.